Reading from the N-terminus, the 660-residue chain is Glycine betaine transporter (660 aa).

Over 1–13 (MPSKTSSRFANIN) the chain is Cytoplasmic. The chain crosses the membrane as a helical span at residues 14 to 34 (PNVFVSTIMIIAIFLAIVILA). At 35-52 (PDAFELLTQQLKNWITES) the chain is on the periplasmic side. Residues 53–73 (FSWFYVLSVAFFLIVLGYIAC) traverse the membrane as a helical segment. Over 74–93 (SSSGKIKLGPDHSQPDYSNS) the chain is Cytoplasmic. Residues 94–114 (SWFAMLFTAGMGIGLMFFGIA) traverse the membrane as a helical segment. The Periplasmic segment spans residues 115-139 (EPIMHYVSPPSGEPETILAAQQSMR). Residues 140-160 (VTFFHWGLHAWGIYAIVALSL) traverse the membrane as a helical segment. Residues 161-195 (SYFAYRHDLPLKIRSSLYPLIGKKIYGPMGDAVDT) lie on the Cytoplasmic side of the membrane. A helical membrane pass occupies residues 196-216 (FATIGTIFGVATTLGFGVTQI). Residues 217–230 (SSGLNYLFGFEPTS) are Periplasmic-facing. A helical transmembrane segment spans residues 231–251 (FSKVVLIIIVSAMAALSVGLG). Residues 252 to 263 (LDKGVKRLAELN) lie on the Cytoplasmic side of the membrane. A helical transmembrane segment spans residues 264–284 (LVLAVTLLAFVFFTSATVYLL). Over 285–316 (QTTIQNTGQYISNLFEMTFNLYAYQPNGWIGG) the chain is Periplasmic. A helical membrane pass occupies residues 317-337 (WTIMYWAWWISWSPFVGMFIA). Topologically, residues 338–347 (RVSRGRTIRE) are cytoplasmic. The chain crosses the membrane as a helical span at residues 348–368 (FIIGVMLIPTGFTLIWMGFMG). Residues 369-401 (NAGLYSILHDGNLSLLNAVQRDSSVALFEFLHS) lie on the Periplasmic side of the membrane. Residues 402 to 422 (LPFSGVMSLLATVLVVLFFVT) form a helical membrane-spanning segment. Over 423 to 446 (SADSGALVVDYLTAKSEDSPVWQR) the chain is Cytoplasmic. The chain crosses the membrane as a helical span at residues 447–467 (LFWIVVMAGLAIILLLAGGLT). Topologically, residues 468–471 (ALQS) are periplasmic. The chain crosses the membrane as a helical span at residues 472 to 492 (ATIMSALPFTFIMLLICWGLI). At 493 to 660 (KALRIDSTKM…LSVMRAQTGN (168 aa)) the chain is on the cytoplasmic side.

Belongs to the BCCT transporter (TC 2.A.15) family.

Its subcellular location is the cell inner membrane. Uptake is activated by NaCl, KCl or mannose gradients across the cell membrane. Inhibited by the protonophore 3,3',4',5-tetrachlorosalicylanilide (TCS). Functionally, energy-dependent uptake of glycine betaine in response to high salinity. In Acinetobacter baylyi (strain ATCC 33305 / BD413 / ADP1), this protein is Glycine betaine transporter.